The primary structure comprises 513 residues: Na(+)/H(+) antiporter NhaB (513 aa).

A run of 11 helical transmembrane segments spans residues 23-43 (LALI…PFVA), 52-72 (IFTL…LLAI), 97-117 (LLLM…LFIF), 144-164 (FLDA…FYGI), 202-222 (LMMH…VGEP), 238-258 (FFLR…LTCL), 303-323 (AIIG…VGLI), 348-368 (TESL…AVII), 391-411 (LFYI…VGTI), 447-467 (ATPN…APLI), and 475-495 (VWMA…CVEF).

Belongs to the NhaB Na(+)/H(+) (TC 2.A.34) antiporter family.

The protein resides in the cell inner membrane. It catalyses the reaction 2 Na(+)(in) + 3 H(+)(out) = 2 Na(+)(out) + 3 H(+)(in). In terms of biological role, na(+)/H(+) antiporter that extrudes sodium in exchange for external protons. The protein is Na(+)/H(+) antiporter NhaB of Escherichia coli (strain SMS-3-5 / SECEC).